A 352-amino-acid chain; its full sequence is Phosphate acyltransferase (352 aa).

Basic and acidic residues predominate over residues 328-339; sequence ESFPGDAREREG. Residues 328–352 form a disordered region; that stretch reads ESFPGDAREREGAQAPDAGTERVAS.

The protein belongs to the PlsX family. Homodimer. Probably interacts with PlsY.

It is found in the cytoplasm. It catalyses the reaction a fatty acyl-[ACP] + phosphate = an acyl phosphate + holo-[ACP]. It functions in the pathway lipid metabolism; phospholipid metabolism. In terms of biological role, catalyzes the reversible formation of acyl-phosphate (acyl-PO(4)) from acyl-[acyl-carrier-protein] (acyl-ACP). This enzyme utilizes acyl-ACP as fatty acyl donor, but not acyl-CoA. This is Phosphate acyltransferase from Geobacter sp. (strain M21).